The following is an 859-amino-acid chain: Leucine--tRNA ligase (859 aa).

Positions 42-52 (PYPSGKLHVGH) match the 'HIGH' region motif. The short motif at 611–615 (KMSKS) is the 'KMSKS' region element. Lys-614 serves as a coordination point for ATP.

Belongs to the class-I aminoacyl-tRNA synthetase family.

The protein localises to the cytoplasm. It carries out the reaction tRNA(Leu) + L-leucine + ATP = L-leucyl-tRNA(Leu) + AMP + diphosphate. This chain is Leucine--tRNA ligase, found in Fusobacterium nucleatum subsp. nucleatum (strain ATCC 25586 / DSM 15643 / BCRC 10681 / CIP 101130 / JCM 8532 / KCTC 2640 / LMG 13131 / VPI 4355).